The primary structure comprises 87 residues: Toxin CsEv3 (87 aa).

The N-terminal stretch at 1 to 19 (MNSLLMITACLFLIGTVWA) is a signal peptide. Residues 20-85 (KEGYLVNKST…TYPLPNKSCG (66 aa)) form the LCN-type CS-alpha/beta domain. 4 disulfide bridges follow: Cys-31/Cys-84, Cys-35/Cys-60, Cys-44/Cys-65, and Cys-48/Cys-67. Residue Cys-84 is modified to Cysteine amide.

The protein belongs to the long (4 C-C) scorpion toxin superfamily. Sodium channel inhibitor family. Beta subfamily. Expressed by the venom gland.

It localises to the secreted. Functionally, beta toxins bind voltage-independently at site-4 of sodium channels (Nav) and shift the voltage of activation toward more negative potentials thereby affecting sodium channel activation and promoting spontaneous and repetitive firing. Induces immediate paralysis in crickets after injection, with a total paralysis occurring within 15-30 minutes and lasting for 1-2 hours. Is also lethal to vertebrate (chicks) when injected in very high dosages (more that 100 mg/kg). This chain is Toxin CsEv3, found in Centruroides sculpturatus (Arizona bark scorpion).